The sequence spans 112 residues: Gastrula zinc finger protein XlCGF9.1 (112 aa).

C2H2-type zinc fingers lie at residues 6–28, 34–56, 62–84, and 90–112; these read FICS…MKIH, FCCP…ERTH, FTCP…RIIH, and YSCP…FKIH.

It belongs to the krueppel C2H2-type zinc-finger protein family.

It localises to the nucleus. Functionally, may be involved in transcriptional regulation. The polypeptide is Gastrula zinc finger protein XlCGF9.1 (Xenopus laevis (African clawed frog)).